We begin with the raw amino-acid sequence, 804 residues long: Protein-lysine N-methyltransferase SMYD4 (804 aa).

112 to 114 (RSA) contacts S-adenosyl-L-methionine. The region spanning 233–574 (SSIGLCVDPL…KGQEILHCYG (342 aa)) is the SET domain. The Zn(2+) site is built by cysteine 296, cysteine 299, cysteine 309, cysteine 312, cysteine 318, cysteine 322, histidine 331, and cysteine 335. An MYND-type zinc finger spans residues 296 to 335 (CHRCLKHTLATVPCDGCSYAKYCSQECLQQAWELYHRTEC). Residues asparagine 427, 539–540 (NH), tyrosine 573, and phenylalanine 595 each bind S-adenosyl-L-methionine.

Belongs to the class V-like SAM-binding methyltransferase superfamily. In terms of assembly, interacts (via MYND-type zinc finger) with HDAC1.

Its subcellular location is the nucleus. The protein resides in the cytoplasm. It carries out the reaction L-lysyl-[protein] + S-adenosyl-L-methionine = N(6)-methyl-L-lysyl-[protein] + S-adenosyl-L-homocysteine + H(+). Protein-lysine N-methyltransferase. Monomethylates PRMT5, modulating its transcriptional activity. May also act as a histone methyltransferase. Plays a critical role in cardiac development. Acts as a key epigenetic regulator of gene expression during cardiac development via its dual activities as a methyltransferase and negative regulator of HDAC1. The protein is Protein-lysine N-methyltransferase SMYD4 of Homo sapiens (Human).